A 301-amino-acid chain; its full sequence is MQKAELITAIVTPFNDRDEIDYGVMQRLVDHLIAEGTDGFVVGATTGEGPTLSHPEKITLYTRFADMVHGRALVIANSGSNNTKETAAFTHEVGGIAGIDATLVVVPYYNKPDQNGMIAHYTAVAAAAQKPIVIYNIPGRTGVDMLPATVATLAQNPMIQGIKQCGSLPALSDIIDRTKHDAFNVWTGEDAQALNIKTLGGMGVISVAAHLYAHSIREMYAALDRGDITTVAALQRQLLPKMAALFHFPSPAPTKAALNALGFQVGSPRLPLLPLNASQQQELAHLLGVPELSAIEAEVLA.

T46 is a binding site for pyruvate. The active-site Proton donor/acceptor is the Y135. The Schiff-base intermediate with substrate role is filled by K163. Position 205 (I205) interacts with pyruvate.

The protein belongs to the DapA family. In terms of assembly, homotetramer; dimer of dimers.

It localises to the cytoplasm. It carries out the reaction L-aspartate 4-semialdehyde + pyruvate = (2S,4S)-4-hydroxy-2,3,4,5-tetrahydrodipicolinate + H2O + H(+). Its pathway is amino-acid biosynthesis; L-lysine biosynthesis via DAP pathway; (S)-tetrahydrodipicolinate from L-aspartate: step 3/4. Its function is as follows. Catalyzes the condensation of (S)-aspartate-beta-semialdehyde [(S)-ASA] and pyruvate to 4-hydroxy-tetrahydrodipicolinate (HTPA). The sequence is that of 4-hydroxy-tetrahydrodipicolinate synthase from Lacticaseibacillus casei (strain BL23) (Lactobacillus casei).